The sequence spans 419 residues: Serine hydroxymethyltransferase (419 aa).

(6S)-5,6,7,8-tetrahydrofolate is bound by residues leucine 120 and 124–126 (GHL). Lysine 229 carries the N6-(pyridoxal phosphate)lysine modification.

Belongs to the SHMT family. Homodimer. Requires pyridoxal 5'-phosphate as cofactor.

It localises to the cytoplasm. The enzyme catalyses (6R)-5,10-methylene-5,6,7,8-tetrahydrofolate + glycine + H2O = (6S)-5,6,7,8-tetrahydrofolate + L-serine. The protein operates within one-carbon metabolism; tetrahydrofolate interconversion. It functions in the pathway amino-acid biosynthesis; glycine biosynthesis; glycine from L-serine: step 1/1. Catalyzes the reversible interconversion of serine and glycine with tetrahydrofolate (THF) serving as the one-carbon carrier. This reaction serves as the major source of one-carbon groups required for the biosynthesis of purines, thymidylate, methionine, and other important biomolecules. Also exhibits THF-independent aldolase activity toward beta-hydroxyamino acids, producing glycine and aldehydes, via a retro-aldol mechanism. In Herpetosiphon aurantiacus (strain ATCC 23779 / DSM 785 / 114-95), this protein is Serine hydroxymethyltransferase.